The chain runs to 459 residues: Phosphoglucosamine mutase (459 aa).

The active-site Phosphoserine intermediate is the serine 105. Residues serine 105, aspartate 252, aspartate 254, and aspartate 256 each coordinate Mg(2+). Serine 105 carries the phosphoserine modification.

This sequence belongs to the phosphohexose mutase family. The cofactor is Mg(2+). Post-translationally, activated by phosphorylation.

It catalyses the reaction alpha-D-glucosamine 1-phosphate = D-glucosamine 6-phosphate. Its function is as follows. Catalyzes the conversion of glucosamine-6-phosphate to glucosamine-1-phosphate. The protein is Phosphoglucosamine mutase of Bifidobacterium adolescentis (strain ATCC 15703 / DSM 20083 / NCTC 11814 / E194a).